The primary structure comprises 139 residues: S-protein homolog 14 (139 aa).

An N-terminal signal peptide occupies residues 1–20 (MNRFIIFMFVVVTYFGLNVA). Asn136 is a glycosylation site (N-linked (GlcNAc...) asparagine).

It belongs to the plant self-incompatibility (S1) protein family.

It localises to the secreted. The chain is S-protein homolog 14 from Arabidopsis thaliana (Mouse-ear cress).